Here is a 562-residue protein sequence, read N- to C-terminus: Ikaros family zinc finger protein (562 aa).

3 consecutive C2H2-type zinc fingers follow at residues 45–67, 73–95, and 101–123; these read IKCE…IRSH, FKCH…YKIH, and FQCP…MRIH. The C2H2-type 4; degenerate zinc finger occupies 129-152; sequence YRCSYCARSYKSRQSMKEHEYQCP. Disordered stretches follow at residues 178–210, 293–342, 361–404, and 451–473; these read NPLA…PPYP, QNQQ…VKPT, QLED…KEDD, and DESK…STQD. The span at 307 to 326 shows a compositional bias: low complexity; it reads PSLSEATPSSHSSHSSAEDS. Over residues 327–336 the composition is skewed to polar residues; the sequence is GQVNKFSPTE. Basic and acidic residues predominate over residues 369 to 383; sequence DSRKRPHSFESEPTP. Residues 456 to 471 show a composition bias toward polar residues; that stretch reads EISSVDSRSPLDQSST. 2 C2H2-type zinc fingers span residues 494-516 and 522-546; these read WECK…MGVH and LVCN…HHQH.

It belongs to the Ikaros C2H2-type zinc-finger protein family. Expression is strongest in the anterior Fol cells of the oikoplastic epithelium.

It is found in the nucleus. This Oikopleura dioica (Tunicate) protein is Ikaros family zinc finger protein.